Reading from the N-terminus, the 92-residue chain is Small ribosomal subunit protein uS19 (92 aa).

It belongs to the universal ribosomal protein uS19 family.

In terms of biological role, protein S19 forms a complex with S13 that binds strongly to the 16S ribosomal RNA. This Shigella boydii serotype 18 (strain CDC 3083-94 / BS512) protein is Small ribosomal subunit protein uS19.